A 242-amino-acid polypeptide reads, in one-letter code: Venom nerve growth factor 2 (242 aa).

An N-terminal signal peptide occupies residues 1–18 (MSMLCYTLIIAFLIGIWA). Residues 19–125 (APQSEDNVPL…ALNRNIQAKR (107 aa)) constitute a propeptide that is removed on maturation. Positions 47 to 66 (DLKTSRNTDQRHPAPKKADD) are enriched in basic and acidic residues. A disordered region spans residues 47-70 (DLKTSRNTDQRHPAPKKADDQELG). Disulfide bonds link Cys139–Cys203, Cys181–Cys231, and Cys191–Cys233.

It belongs to the NGF-beta family. Homodimer; non-covalently linked. In terms of tissue distribution, expressed by the venom gland.

It localises to the secreted. In terms of biological role, nerve growth factor is important for the development and maintenance of the sympathetic and sensory nervous systems. It stimulates division and differentiation of sympathetic and embryonic sensory neurons as well as basal forebrain cholinergic neurons in the brain. Its relevance in the snake venom is not clear. However, it has been shown to inhibit metalloproteinase-dependent proteolysis of platelet glycoprotein Ib alpha, suggesting a metalloproteinase inhibition to prevent metalloprotease autodigestion and/or protection against prey proteases. Binds a lipid between the two protein chains in the homodimer. The lipid-bound form promotes histamine relase from mouse mast cells, contrary to the lipid-free form. In Pseudechis australis (Mulga snake), this protein is Venom nerve growth factor 2.